The chain runs to 254 residues: Probable phosphatase TTE1963 (254 aa).

Zn(2+) contacts are provided by His14, His16, His22, His47, Glu80, His108, His139, Asp200, and His202.

The protein belongs to the PHP family. Requires Zn(2+) as cofactor.

This chain is Probable phosphatase TTE1963, found in Caldanaerobacter subterraneus subsp. tengcongensis (strain DSM 15242 / JCM 11007 / NBRC 100824 / MB4) (Thermoanaerobacter tengcongensis).